Consider the following 98-residue polypeptide: Small ribosomal subunit protein uS17B (98 aa).

It belongs to the universal ribosomal protein uS17 family. Part of the 30S ribosomal subunit.

Functionally, one of the primary rRNA binding proteins, it binds specifically to the 5'-end of 16S ribosomal RNA. The chain is Small ribosomal subunit protein uS17B from Bacteroides thetaiotaomicron (strain ATCC 29148 / DSM 2079 / JCM 5827 / CCUG 10774 / NCTC 10582 / VPI-5482 / E50).